The following is a 259-amino-acid chain: Tubulin-specific chaperone C (259 aa).

Residues 112-241 (PEVYFENDTL…DEHPILDFTW (130 aa)) form the C-CAP/cofactor C-like domain.

This sequence belongs to the TBCC family.

It localises to the cytoplasm. The protein resides in the cytoskeleton. Its function is as follows. Tubulin-folding protein; involved in the final step of the tubulin folding pathway. This chain is Tubulin-specific chaperone C (cin2), found in Schizosaccharomyces pombe (strain 972 / ATCC 24843) (Fission yeast).